The primary structure comprises 734 residues: Photosystem I P700 chlorophyll a apoprotein A2 (734 aa).

The next 8 membrane-spanning stretches (helical) occupy residues 46–69 (IFAS…FHVA), 135–158 (LYTG…FHLQ), 175–199 (LDHH…HVAI), 273–291 (IAHH…GHMY), 330–353 (LHFQ…QHMY), 369–395 (AALY…IFFI), 417–439 (AIIS…LYVH), and 517–535 (FLVH…LILV). 2 residues coordinate [4Fe-4S] cluster: Cys-559 and Cys-568. Helical transmembrane passes span 575–596 (AFYL…YWHW) and 643–665 (LSVW…MFLI). Chlorophyll a contacts are provided by His-654, Met-662, and Tyr-670. A phylloquinone-binding site is contributed by Trp-671. A helical transmembrane segment spans residues 707–727 (LVGLAHFSVGYIFTYAAFLIA).

The protein belongs to the PsaA/PsaB family. In terms of assembly, the PsaA/B heterodimer binds the P700 chlorophyll special pair and subsequent electron acceptors. PSI consists of a core antenna complex that captures photons, and an electron transfer chain that converts photonic excitation into a charge separation. The eukaryotic PSI reaction center is composed of at least 11 subunits. P700 is a chlorophyll a/chlorophyll a' dimer, A0 is one or more chlorophyll a, A1 is one or both phylloquinones and FX is a shared 4Fe-4S iron-sulfur center. serves as cofactor.

It localises to the plastid. The protein localises to the chloroplast thylakoid membrane. The catalysed reaction is reduced [plastocyanin] + hnu + oxidized [2Fe-2S]-[ferredoxin] = oxidized [plastocyanin] + reduced [2Fe-2S]-[ferredoxin]. Functionally, psaA and PsaB bind P700, the primary electron donor of photosystem I (PSI), as well as the electron acceptors A0, A1 and FX. PSI is a plastocyanin-ferredoxin oxidoreductase, converting photonic excitation into a charge separation, which transfers an electron from the donor P700 chlorophyll pair to the spectroscopically characterized acceptors A0, A1, FX, FA and FB in turn. Oxidized P700 is reduced on the lumenal side of the thylakoid membrane by plastocyanin. In Cycas taitungensis (Prince sago), this protein is Photosystem I P700 chlorophyll a apoprotein A2.